The sequence spans 230 residues: N-(5'-phosphoribosyl)anthranilate isomerase (230 aa).

Belongs to the TrpF family.

The enzyme catalyses N-(5-phospho-beta-D-ribosyl)anthranilate = 1-(2-carboxyphenylamino)-1-deoxy-D-ribulose 5-phosphate. It participates in amino-acid biosynthesis; L-tryptophan biosynthesis; L-tryptophan from chorismate: step 3/5. This chain is N-(5'-phosphoribosyl)anthranilate isomerase, found in Trichodesmium erythraeum (strain IMS101).